Reading from the N-terminus, the 242-residue chain is Probable septum site-determining protein MinC (242 aa).

The span at 120–135 shows a compositional bias: basic and acidic residues; it reads APKKVEEKPAEPEHKP. Residues 120-144 are disordered; the sequence is APKKVEEKPAEPEHKPSRIVTSPVR.

It belongs to the MinC family. Interacts with MinD and FtsZ.

Functionally, cell division inhibitor that blocks the formation of polar Z ring septums. Rapidly oscillates between the poles of the cell to destabilize FtsZ filaments that have formed before they mature into polar Z rings. Prevents FtsZ polymerization. This Ectopseudomonas mendocina (strain ymp) (Pseudomonas mendocina) protein is Probable septum site-determining protein MinC.